Reading from the N-terminus, the 211-residue chain is Thiamine-phosphate synthase (211 aa).

4-amino-2-methyl-5-(diphosphooxymethyl)pyrimidine contacts are provided by residues 37 to 41 (QLRIK) and Asn69. 2 residues coordinate Mg(2+): Asp70 and Asp89. Position 108 (Ser108) interacts with 4-amino-2-methyl-5-(diphosphooxymethyl)pyrimidine. A 2-[(2R,5Z)-2-carboxy-4-methylthiazol-5(2H)-ylidene]ethyl phosphate-binding site is contributed by 134–136 (TQT). Lys137 is a binding site for 4-amino-2-methyl-5-(diphosphooxymethyl)pyrimidine. 2-[(2R,5Z)-2-carboxy-4-methylthiazol-5(2H)-ylidene]ethyl phosphate-binding positions include Gly166 and 186–187 (VS).

The protein belongs to the thiamine-phosphate synthase family. Requires Mg(2+) as cofactor.

It catalyses the reaction 2-[(2R,5Z)-2-carboxy-4-methylthiazol-5(2H)-ylidene]ethyl phosphate + 4-amino-2-methyl-5-(diphosphooxymethyl)pyrimidine + 2 H(+) = thiamine phosphate + CO2 + diphosphate. The enzyme catalyses 2-(2-carboxy-4-methylthiazol-5-yl)ethyl phosphate + 4-amino-2-methyl-5-(diphosphooxymethyl)pyrimidine + 2 H(+) = thiamine phosphate + CO2 + diphosphate. The catalysed reaction is 4-methyl-5-(2-phosphooxyethyl)-thiazole + 4-amino-2-methyl-5-(diphosphooxymethyl)pyrimidine + H(+) = thiamine phosphate + diphosphate. Its pathway is cofactor biosynthesis; thiamine diphosphate biosynthesis; thiamine phosphate from 4-amino-2-methyl-5-diphosphomethylpyrimidine and 4-methyl-5-(2-phosphoethyl)-thiazole: step 1/1. Condenses 4-methyl-5-(beta-hydroxyethyl)thiazole monophosphate (THZ-P) and 2-methyl-4-amino-5-hydroxymethyl pyrimidine pyrophosphate (HMP-PP) to form thiamine monophosphate (TMP). The chain is Thiamine-phosphate synthase from Escherichia coli O6:H1 (strain CFT073 / ATCC 700928 / UPEC).